We begin with the raw amino-acid sequence, 1791 residues long: Sodium channel protein type 11 subunit alpha (1791 aa).

Over 1 to 126 the chain is Cytoplasmic; sequence MDDRCYPVIF…SIRSLAIRVS (126 aa). An I repeat occupies 115–408; it reads FNSIRSLAIR…VTMAYEEQNK (294 aa). A helical membrane pass occupies residues 127–148; the sequence is VHSLFSMFIIGTVIINCVFMAT. The Extracellular segment spans residues 149 to 156; the sequence is GPAKNSNS. The helical transmembrane segment at 157–180 threads the bilayer; that stretch reads NNTDIAECVFTGIYIFEALIKILA. Residues 181 to 192 are Cytoplasmic-facing; that stretch reads RGFILDEFSFLR. A helical transmembrane segment spans residues 193–212; sequence DPWNWLDSIVIGIAIVSYIP. Residues 213–219 lie on the Extracellular side of the membrane; that stretch reads GITIKLL. Residues 220-239 form a helical; Voltage-sensor membrane-spanning segment; sequence PLRTFRVFRALKAISVVSRL. Over 240 to 255 the chain is Cytoplasmic; that stretch reads KVIVGALLRSVKKLVN. The helical transmembrane segment at 256 to 269 threads the bilayer; it reads VIILTFFCLSIFAL. Residues 270-344 are Extracellular-facing; it reads VGQQLFMGSL…PDYNYTNFDN (75 aa). Cysteines 283 and 322 form a disulfide. Residues Asn-290 and Asn-338 are each glycosylated (N-linked (GlcNAc...) asparagine). Residues 345-369 constitute an intramembrane region (pore-forming); that stretch reads FGWSFLAMFRLMTQDSWEKLYQQTL. The Extracellular portion of the chain corresponds to 370-376; sequence RTTGLYS. The helical transmembrane segment at 377-402 threads the bilayer; that stretch reads VFFFIVVIFLGSFYLINLTLAVVTMA. The Cytoplasmic portion of the chain corresponds to 403-572; the sequence is YEEQNKNVAA…WLCVKKVLRT (170 aa). The II repeat unit spans residues 559-833; that stretch reads CCPQWLCVKK…EGEARKTKVQ (275 aa). A helical transmembrane segment spans residues 573–596; that stretch reads VMTDPFTELAITICIIINTVFLAM. At 597 to 607 the chain is on the extracellular side; that stretch reads EHHKMEASFEK. The helical transmembrane segment at 608 to 631 threads the bilayer; that stretch reads MLNIGNLVFTSIFIAEMCLKIIAL. The Cytoplasmic portion of the chain corresponds to 632–639; sequence DPYHYFRR. The chain crosses the membrane as a helical span at residues 640–659; it reads GWNIFDSIVALLSFADVMNC. The Extracellular portion of the chain corresponds to 660–667; sequence VLQKRSWP. A helical; Voltage-sensor membrane pass occupies residues 668 to 687; that stretch reads FLRSFRVLRVFKLAKSWPTL. Over 688–702 the chain is Cytoplasmic; that stretch reads NTLIKIIGNSVGALG. A helical membrane pass occupies residues 703–725; that stretch reads SLTVVLVIVIFIFSVVGMQLFGR. The Extracellular portion of the chain corresponds to 726 to 753; that stretch reads SFNSQKSPKLCNPTGPTVSCLRHWHMGD. Residues 754-774 constitute an intramembrane region (pore-forming); that stretch reads FWHSFLVVFRILCGEWIENMW. Residues 775–785 lie on the Extracellular side of the membrane; sequence ECMQEANASSS. Cys-776 and Cys-787 are joined by a disulfide. The N-linked (GlcNAc...) asparagine glycan is linked to Asn-781. Residues 786-811 traverse the membrane as a helical segment; sequence LCVIVFILITVIGKLVVLNLFIALLL. Residues 812-1051 lie on the Cytoplasmic side of the membrane; it reads NSFSNEERNG…WWNLRKTCYQ (240 aa). Residues 1044-1339 form an III repeat; it reads NLRKTCYQIV…KKYYNAMKKL (296 aa). Residues 1052–1074 traverse the membrane as a helical segment; sequence IVKHSWFESFIIFVILLSSGALI. Over 1075–1088 the chain is Extracellular; the sequence is FEDVHLENQPKIQE. Residues 1089–1114 form a helical membrane-spanning segment; the sequence is LLNCTDIIFTHIFILEMVLKWVAFGF. The Cytoplasmic segment spans residues 1115–1120; it reads GKYFTS. Residues 1121 to 1138 form a helical membrane-spanning segment; that stretch reads AWCCLDFIIVIVSVTTLI. Residue Asn-1139 is a topological domain, extracellular. A helical; Voltage-sensor transmembrane segment spans residues 1140-1161; it reads LMELKSFRTLRALRPLRALSQF. Topologically, residues 1162–1180 are cytoplasmic; it reads EGMKVVVNALIGAIPAILN. Residues 1181–1202 form a helical membrane-spanning segment; sequence VLLVCLIFWLVFCILGVYFFSG. Residues 1203-1243 are Extracellular-facing; sequence KFGKCINGTDSVINYTIITNKSQCESGNFSWINQKVNFDNV. 4 N-linked (GlcNAc...) asparagine glycosylation sites follow: Asn-1209, Asn-1216, Asn-1222, and Asn-1230. The segment at residues 1244–1265 is an intramembrane region (pore-forming); sequence GNAYLALLQVATFKGWMDIIYA. Residues 1266–1281 lie on the Extracellular side of the membrane; the sequence is AVDSTEKEQQPEFESN. A helical transmembrane segment spans residues 1282–1308; the sequence is SLGYIYFVVFIIFGSFFTLNLFIGVII. The Cytoplasmic portion of the chain corresponds to 1309 to 1361; sequence DNFNQQQKKLGGQDIFMTEEQKKYYNAMKKLGSKKPQKPIPRPLNKCQGLVFD. One copy of the IV repeat lies at 1348 to 1639; that stretch reads IPRPLNKCQG…WEKFDPEATQ (292 aa). A helical membrane pass occupies residues 1362–1385; the sequence is IVTSQIFDIIIISLIILNMISMMA. Over 1386 to 1396 the chain is Extracellular; it reads ESYNQPKAMKS. Residues 1397–1420 traverse the membrane as a helical segment; the sequence is ILDHLNWVFVVIFTLECLIKIFAL. Residues 1421 to 1426 are Cytoplasmic-facing; the sequence is RQYYFT. Residues 1427-1450 form a helical membrane-spanning segment; the sequence is NGWNLFDCVVVLLSIVSTMISTLE. Topologically, residues 1451–1461 are extracellular; the sequence is NQEHIPFPPTL. A helical; Voltage-sensor transmembrane segment spans residues 1462 to 1484; that stretch reads FRIVRLARIGRILRLVRAARGIR. Over 1485-1499 the chain is Cytoplasmic; sequence TLLFALMMSLPSLFN. The helical transmembrane segment at 1500-1522 threads the bilayer; that stretch reads IGLLLFLIMFIYAILGMNWFSKV. Residues 1523–1536 lie on the Extracellular side of the membrane; sequence NPESGIDDIFNFKT. An intramembrane region (pore-forming) is located at residues 1537-1559; that stretch reads FASSMLCLFQISTSAGWDSLLSP. Residues 1560–1579 lie on the Extracellular side of the membrane; it reads MLRSKESCNSSSENCHLPGI. N-linked (GlcNAc...) asparagine glycosylation is present at Asn-1568. A helical membrane pass occupies residues 1580–1604; the sequence is ATSYFVSYIIISFLIVVNMYIAVIL. Topologically, residues 1605–1791 are cytoplasmic; the sequence is ENFNTATEES…GVAKGKVHCD (187 aa).

It belongs to the sodium channel (TC 1.A.1.10) family. Nav1.9/SCN11A subfamily. In terms of assembly, the voltage-resistant sodium channel consists of an ion conducting pore forming alpha-subunit regulated by one or more auxiliary subunits SCN1B, SCN2B and SCN3B. In terms of tissue distribution, expressed in the dorsal root ganglia and trigeminal ganglia, olfactory bulb, hippocampus, cerebellar cortex, spinal cord, spleen, small intestine and placenta.

The protein resides in the cell membrane. It catalyses the reaction Na(+)(in) = Na(+)(out). Its activity is regulated as follows. Activity is not sensitive to inhibition by tetrodotoxin. In terms of biological role, sodium channel mediating the voltage-dependent sodium ion permeability of excitable membranes. Assuming opened or closed conformations in response to the voltage difference across the membrane, the protein forms a sodium-selective channel through which sodium ions may pass in accordance with their electrochemical gradient. Involved in membrane depolarization during action potential in nociceptors which function as key relay stations for the electrical transmission of pain signals from the periphery to the central nervous system. Also involved in rapid BDNF-evoked neuronal depolarization. This Homo sapiens (Human) protein is Sodium channel protein type 11 subunit alpha.